Consider the following 474-residue polypeptide: MKLSMPRFDQAPVLVVGDVMLDRYWHGATSRISPEAPVPVVRVEQHEDRPGGAANVALNIAALGAQALLVGVTGRDEAADSLANSLKAAGVDARFQRIDSQPTIVKLRVMSRHQQLLRVDFEEPFRTDAAALALDVEALLDQVKVLVLSDYGKGALQNHQVLIQAARARNIPVLADPKGKDFAIYRGASLITPNLSEFETIVGRCADEAELVAKGQALMSELELGALLVTRGEHGMTLLRHGQPALHLPARAREVFDVTGAGDTVISTLAAALAAGEELPSAVGLANLAAGIVVGKLGTAAISAPELRRAVQREQGSERGVLGLEQLLLAIEDARAHGEKIVFTNGCFDILHAGHVTYLEQARAQGDRLIVGVNDDASVTRLKGAGRPINSVDRRMAVLAGLGAVDWVVSFAEDTPERLLEQVRPDVLVKGGDYGVEQVVGAQIVKAYGGEVRVLGLVENSSTTAIVEKIRQKG.

The interval 1–318 is ribokinase; sequence MKLSMPRFDQ…RAVQREQGSE (318 aa). 194–197 contributes to the ATP binding site; the sequence is NLSE. Asp263 is a catalytic residue. Residues 343–474 are cytidylyltransferase; sequence FTNGCFDILH…AIVEKIRQKG (132 aa).

It in the N-terminal section; belongs to the carbohydrate kinase PfkB family. The protein in the C-terminal section; belongs to the cytidylyltransferase family. In terms of assembly, homodimer.

It catalyses the reaction D-glycero-beta-D-manno-heptose 7-phosphate + ATP = D-glycero-beta-D-manno-heptose 1,7-bisphosphate + ADP + H(+). It carries out the reaction D-glycero-beta-D-manno-heptose 1-phosphate + ATP + H(+) = ADP-D-glycero-beta-D-manno-heptose + diphosphate. It functions in the pathway nucleotide-sugar biosynthesis; ADP-L-glycero-beta-D-manno-heptose biosynthesis; ADP-L-glycero-beta-D-manno-heptose from D-glycero-beta-D-manno-heptose 7-phosphate: step 1/4. The protein operates within nucleotide-sugar biosynthesis; ADP-L-glycero-beta-D-manno-heptose biosynthesis; ADP-L-glycero-beta-D-manno-heptose from D-glycero-beta-D-manno-heptose 7-phosphate: step 3/4. Catalyzes the phosphorylation of D-glycero-D-manno-heptose 7-phosphate at the C-1 position to selectively form D-glycero-beta-D-manno-heptose-1,7-bisphosphate. Functionally, catalyzes the ADP transfer from ATP to D-glycero-beta-D-manno-heptose 1-phosphate, yielding ADP-D-glycero-beta-D-manno-heptose. This chain is Bifunctional protein HldE, found in Pseudomonas paraeruginosa (strain DSM 24068 / PA7) (Pseudomonas aeruginosa (strain PA7)).